Reading from the N-terminus, the 115-residue chain is Large ribosomal subunit protein bL19 (115 aa).

This sequence belongs to the bacterial ribosomal protein bL19 family.

In terms of biological role, this protein is located at the 30S-50S ribosomal subunit interface and may play a role in the structure and function of the aminoacyl-tRNA binding site. The polypeptide is Large ribosomal subunit protein bL19 (Bacillus licheniformis (strain ATCC 14580 / DSM 13 / JCM 2505 / CCUG 7422 / NBRC 12200 / NCIMB 9375 / NCTC 10341 / NRRL NRS-1264 / Gibson 46)).